The chain runs to 190 residues: Glutamyl-tRNA(Gln) amidotransferase subunit C, mitochondrial (190 aa).

Residues 1-96 (MISFQIILQQ…VLNLKQAVRF (96 aa)) constitute a mitochondrion transit peptide. Positions 28–57 (KSNSTAVGSSDEDDEIYVPKKPIPSPIDQS) are disordered.

The protein belongs to the GatC family. Subunit of the heterotrimeric GatCAB amidotransferase (AdT) complex, composed of A, B and C subunits.

The protein localises to the mitochondrion. It carries out the reaction L-glutamyl-tRNA(Gln) + L-glutamine + ATP + H2O = L-glutaminyl-tRNA(Gln) + L-glutamate + ADP + phosphate + H(+). Its function is as follows. Allows the formation of correctly charged Gln-tRNA(Gln) through the transamidation of misacylated Glu-tRNA(Gln) in the mitochondria. The reaction takes place in the presence of glutamine and ATP through an activated gamma-phospho-Glu-tRNA(Gln). The sequence is that of Glutamyl-tRNA(Gln) amidotransferase subunit C, mitochondrial from Loa loa (Eye worm).